The following is a 702-amino-acid chain: Putative GMC-type oxidoreductase R135 (702 aa).

A helical transmembrane segment spans residues 55–75 (LTGDIVIIGAGAAGSLLAHYL). 58–88 (DIVIIGAGAAGSLLAHYLARFSNMKIILLEA) provides a ligand contact to FAD. Residue His-628 is part of the active site.

This sequence belongs to the GMC oxidoreductase family. The cofactor is FAD.

It localises to the virion. The protein localises to the host membrane. This Acanthamoeba polyphaga (Amoeba) protein is Putative GMC-type oxidoreductase R135.